Here is a 374-residue protein sequence, read N- to C-terminus: 5-aminosalicylate 1,2-dioxygenase (374 aa).

The protein belongs to the gentisate 1,2-dioxygenase family. It depends on Fe(2+) as a cofactor.

The catalysed reaction is 5-amino-2-hydroxybenzoate + O2 = (2Z,4E)-4-amino-6-oxohepta-2,4-dienedioate + H(+). Inhibited by SDS and o-phenanthroline, a ferrous iron chelator. Partially inhibited by EDTA. Functionally, involved in the biodegradation of 3-aminobenzoate. Catalyzes the cleavage of the 5-aminosalicylate (5ASA) aromatic ring to form 4-amino-6-oxohepta-2,4-dienedioate (cis-ACOHDA). Can also convert gentisate, but the catalytic efficiency with 5ASA is 70-fold higher. This chain is 5-aminosalicylate 1,2-dioxygenase, found in Comamonas sp.